The primary structure comprises 440 residues: MTQNYVYIETFGCQMNVNDSERILTMLADIGYVPTQEPARARLILLNTCSVRAGAEEKVYRRLENLVVLKRHNSRLIIGVGGCVAQQEGEALLERIPKLDLVFGTHNLHLLNDMVLAAERGERKSETSFIDNDQRLDLFPPIRGTARISSFVTVMQGCENYCSYCIVPYVRGPEVSRRSGDILREVRQLADQGVREVALLGQNVNSYGLKSSAEPSFAELIRLVAAVDGIRRIRFFTSHPKDMSPELIACFGDLPALCSQLHLPAQSGSDNVLARMGRGYTREEYLEKVRALRAVRPDIVFTGDMIVGFPGETEEEFQETLSLMEEVRYIDLFSFAYSPRPGTRAAELADDLSRGEKQSRLERLQALQKRTTMEINDVLLGTRQTVLVEREGKRPGQISGKADNGRTVNFSGDRSLIGTFVDLRIIQVFQNSLLGELLPG.

Positions 4 to 120 constitute an MTTase N-terminal domain; it reads NYVYIETFGC…LNDMVLAAER (117 aa). [4Fe-4S] cluster contacts are provided by Cys13, Cys49, Cys83, Cys158, Cys162, and Cys165. The 231-residue stretch at 144–374 folds into the Radical SAM core domain; sequence GTARISSFVT…QALQKRTTME (231 aa). In terms of domain architecture, TRAM spans 377-439; the sequence is DVLLGTRQTV…QNSLLGELLP (63 aa).

The protein belongs to the methylthiotransferase family. MiaB subfamily. In terms of assembly, monomer. [4Fe-4S] cluster is required as a cofactor.

It localises to the cytoplasm. It catalyses the reaction N(6)-dimethylallyladenosine(37) in tRNA + (sulfur carrier)-SH + AH2 + 2 S-adenosyl-L-methionine = 2-methylsulfanyl-N(6)-dimethylallyladenosine(37) in tRNA + (sulfur carrier)-H + 5'-deoxyadenosine + L-methionine + A + S-adenosyl-L-homocysteine + 2 H(+). Its function is as follows. Catalyzes the methylthiolation of N6-(dimethylallyl)adenosine (i(6)A), leading to the formation of 2-methylthio-N6-(dimethylallyl)adenosine (ms(2)i(6)A) at position 37 in tRNAs that read codons beginning with uridine. This is tRNA-2-methylthio-N(6)-dimethylallyladenosine synthase from Pelobacter propionicus (strain DSM 2379 / NBRC 103807 / OttBd1).